The primary structure comprises 350 residues: Selenide, water dikinase (350 aa).

Cysteine 17 is an active-site residue. ATP-binding positions include lysine 20 and 48–50; that span reads LFD. Residue aspartate 51 participates in Mg(2+) binding. Residues aspartate 68, aspartate 91, and 139–141 each bind ATP; that span reads GHS. Aspartate 91 is a Mg(2+) binding site. Residue aspartate 229 coordinates Mg(2+).

Belongs to the selenophosphate synthase 1 family. Class I subfamily. In terms of assembly, homodimer. Requires Mg(2+) as cofactor.

It catalyses the reaction hydrogenselenide + ATP + H2O = selenophosphate + AMP + phosphate + 2 H(+). In terms of biological role, synthesizes selenophosphate from selenide and ATP. The sequence is that of Selenide, water dikinase from Bdellovibrio bacteriovorus (strain ATCC 15356 / DSM 50701 / NCIMB 9529 / HD100).